Consider the following 212-residue polypeptide: uncharacterized protein (212 aa).

This is an uncharacterized protein from Dryophytes versicolor (chameleon treefrog).